Consider the following 202-residue polypeptide: uncharacterized protein (202 aa).

A helical transmembrane segment spans residues 10 to 30; that stretch reads TAAIFLLCCTSVIILFTIAVV.

Belongs to the bacterial sugar transferase family.

The protein localises to the cell membrane. Its function is as follows. May be involved in the production of the exopolysaccharide (EPS) component of the extracellular matrix during biofilm formation. EPS is responsible for the adhesion of chains of cells into bundles. This is an uncharacterized protein from Bacillus subtilis (strain 168).